We begin with the raw amino-acid sequence, 224 residues long: UPF0758 protein CV_3079 (224 aa).

The MPN domain maps to 102-224; it reads ALSSPQQVRD…AESFAERGWL (123 aa). Zn(2+) contacts are provided by H173, H175, and D186. A JAMM motif motif is present at residues 173-186; it reads HNHPSGVSEPSSAD.

Belongs to the UPF0758 family.

In Chromobacterium violaceum (strain ATCC 12472 / DSM 30191 / JCM 1249 / CCUG 213 / NBRC 12614 / NCIMB 9131 / NCTC 9757 / MK), this protein is UPF0758 protein CV_3079.